Here is a 287-residue protein sequence, read N- to C-terminus: Glucose uptake protein GlcU (287 aa).

8 helical membrane-spanning segments follow: residues 4–26 (LLAL…LGGG), 38–60 (ALIV…IFIV), 110–132 (WSTP…GIIL), 153–175 (ILIL…LFNV), 180–197 (ALLP…VLTY), 210–227 (ILPG…FISQ), 232–254 (VATS…IFIL), and 261–283 (RQLI…LGIA).

This sequence belongs to the GRP transporter (TC 2.A.7.5) family.

It is found in the cell membrane. Functionally, involved in the uptake of glucose. The polypeptide is Glucose uptake protein GlcU (glcU) (Bacillus subtilis (strain 168)).